The primary structure comprises 347 residues: Extracellular exo-alpha-(1-&gt;5)-L-arabinofuranosidase ArbA (347 aa).

A signal peptide spans 1–31; it reads MPTHHPITRQHWHHSWLSALALLCASLACGA. Residue D35 coordinates substrate. Residue D38 is the Proton acceptor of the active site. Residues 90–92, 115–116, N155, S175, and E221 contribute to the substrate site; these read DGH and GK. Residue E221 is the Proton donor of the active site. Position 291 (H291) interacts with Ca(2+). A substrate-binding site is contributed by Q316.

This sequence belongs to the glycosyl hydrolase 43 family. As to quaternary structure, homodimer.

Its subcellular location is the secreted. The catalysed reaction is Hydrolysis of terminal non-reducing alpha-L-arabinofuranoside residues in alpha-L-arabinosides.. Its pathway is glycan metabolism; L-arabinan degradation. Involved in the degradation of arabinan and is a key enzyme in the complete degradation of the plant cell wall. Catalyzes the cleavage of the terminal alpha-(1-&gt;5)-arabinofuranosyl bonds of linear arabinan and carboxymethylarabinan to produce almost exclusively arabinotriose. This is Extracellular exo-alpha-(1-&gt;5)-L-arabinofuranosidase ArbA (arbA) from Cellvibrio japonicus (strain Ueda107) (Pseudomonas fluorescens subsp. cellulosa).